The sequence spans 464 residues: Protein FAM90A13 (464 aa).

Disordered regions lie at residues 1–42 (MMAR…DPRL), 69–389 (VPAT…HDGA), and 411–437 (APSF…SEAP). Composition is skewed to basic and acidic residues over residues 74–89 (GKKE…KPRG) and 97–114 (NKDK…DPQR). Residues 180–197 (LASLSPLRKASLSSSSSL) show a composition bias toward low complexity.

It belongs to the FAM90 family.

This chain is Protein FAM90A13, found in Homo sapiens (Human).